A 107-amino-acid polypeptide reads, in one-letter code: Acidic phospholipase A2 2 (107 aa).

6 cysteine pairs are disulfide-bonded: Cys-26–Cys-100, Cys-28–Cys-38, Cys-37–Cys-82, Cys-43–Cys-107, Cys-44–Cys-75, and Cys-62–Cys-73. Ca(2+) contacts are provided by Tyr-27, Gly-29, and Gly-31. The active site involves His-41. Asp-42 provides a ligand contact to Ca(2+). Asp-76 is an active-site residue.

Ca(2+) is required as a cofactor. In terms of tissue distribution, expressed by the venom gland.

Its subcellular location is the secreted. It catalyses the reaction a 1,2-diacyl-sn-glycero-3-phosphocholine + H2O = a 1-acyl-sn-glycero-3-phosphocholine + a fatty acid + H(+). PLA2 catalyzes the calcium-dependent hydrolysis of the 2-acyl groups in 3-sn-phosphoglycerides. The polypeptide is Acidic phospholipase A2 2 (Bothrops insularis (Golden lancehead)).